Reading from the N-terminus, the 346-residue chain is Thiamine-phosphate synthase (346 aa).

Positions 1-125 are unknown; it reads MSVTPNPDQH…SKISAQIRYE (125 aa). A thiamine-phosphate synthase region spans residues 126 to 346; it reads IYDLEVIILK…SKELLGKLKK (221 aa). 4-amino-2-methyl-5-(diphosphooxymethyl)pyrimidine contacts are provided by residues 177 to 181 and Asn-209; that span reads QYRCK. The Mg(2+) site is built by Asp-210 and Asp-229. Ser-248 provides a ligand contact to 4-amino-2-methyl-5-(diphosphooxymethyl)pyrimidine. 274–276 contacts 2-[(2R,5Z)-2-carboxy-4-methylthiazol-5(2H)-ylidene]ethyl phosphate; that stretch reads TKS. Residue Lys-277 coordinates 4-amino-2-methyl-5-(diphosphooxymethyl)pyrimidine. Gly-304 lines the 2-[(2R,5Z)-2-carboxy-4-methylthiazol-5(2H)-ylidene]ethyl phosphate pocket.

The protein belongs to the thiamine-phosphate synthase family. It depends on Mg(2+) as a cofactor.

It carries out the reaction 2-[(2R,5Z)-2-carboxy-4-methylthiazol-5(2H)-ylidene]ethyl phosphate + 4-amino-2-methyl-5-(diphosphooxymethyl)pyrimidine + 2 H(+) = thiamine phosphate + CO2 + diphosphate. The enzyme catalyses 2-(2-carboxy-4-methylthiazol-5-yl)ethyl phosphate + 4-amino-2-methyl-5-(diphosphooxymethyl)pyrimidine + 2 H(+) = thiamine phosphate + CO2 + diphosphate. It catalyses the reaction 4-methyl-5-(2-phosphooxyethyl)-thiazole + 4-amino-2-methyl-5-(diphosphooxymethyl)pyrimidine + H(+) = thiamine phosphate + diphosphate. It functions in the pathway cofactor biosynthesis; thiamine diphosphate biosynthesis; thiamine phosphate from 4-amino-2-methyl-5-diphosphomethylpyrimidine and 4-methyl-5-(2-phosphoethyl)-thiazole: step 1/1. Condenses 4-methyl-5-(beta-hydroxyethyl)thiazole monophosphate (THZ-P) and 2-methyl-4-amino-5-hydroxymethyl pyrimidine pyrophosphate (HMP-PP) to form thiamine monophosphate (TMP). The polypeptide is Thiamine-phosphate synthase (Prochlorococcus marinus (strain SARG / CCMP1375 / SS120)).